Here is a 146-residue protein sequence, read N- to C-terminus: Glycosylation-dependent cell adhesion molecule 1 (146 aa).

An N-terminal signal peptide occupies residues 1-19 (MKFFTVLLFASLAATSLAA). Positions 25 to 112 (DELHLRTQPT…SAATSEGKLT (88 aa)) are disordered. The span at 48–60 (ISKESTSSKDLSK) shows a compositional bias: basic and acidic residues. Ser54, Ser59, and Ser71 each carry phosphoserine. Over residues 74–106 (NVGTESTKPQSQEAQDGLRSGSSQQEETTSAAT) the composition is skewed to polar residues.

Belongs to the PP3/GlyCAM-1 family. In terms of processing, extensively O-glycosylated. In terms of tissue distribution, lymph nodes. Associated with the lumenal surface of the high endothelial venules of peripheral lymph nodes.

The protein resides in the cell membrane. Functionally, adhesion molecule that accomplishes cell binding by presenting carbohydrate(s) to the lectin domain of L-selectin. In Rattus norvegicus (Rat), this protein is Glycosylation-dependent cell adhesion molecule 1 (Glycam1).